The following is a 322-amino-acid chain: F-box protein At2g16300 (322 aa).

The region spanning 2–50 (ADWSLLPNDLLELIVGHLETSFEIVLFRSVCSSWRSVVPPQDQSRCLSI) is the F-box domain.

The chain is F-box protein At2g16300 from Arabidopsis thaliana (Mouse-ear cress).